Here is a 246-residue protein sequence, read N- to C-terminus: Orotidine 5'-phosphate decarboxylase (246 aa).

Substrate contacts are provided by residues D22, K44, 71–80, T130, R191, Q201, G221, and R222; that span reads DLKYHDIPHT. The Proton donor role is filled by K73.

This sequence belongs to the OMP decarboxylase family. Type 1 subfamily. In terms of assembly, homodimer.

It catalyses the reaction orotidine 5'-phosphate + H(+) = UMP + CO2. The protein operates within pyrimidine metabolism; UMP biosynthesis via de novo pathway; UMP from orotate: step 2/2. In terms of biological role, catalyzes the decarboxylation of orotidine 5'-monophosphate (OMP) to uridine 5'-monophosphate (UMP). The protein is Orotidine 5'-phosphate decarboxylase of Neisseria meningitidis serogroup B (strain ATCC BAA-335 / MC58).